Consider the following 276-residue polypeptide: MRYCAFRLGLFFIGYSCCVLLSTPTLASSLEKSDAESTQTEQWNSNGKRILEADDPKLSLEGERGITPEVVPAFEAIGKAKTPEKAVPRMSLRSKLNPVNWAKGLWFKLRQLRARYRAWRLRRIIADKRGLGPALLNGLTPLHVKNVKDETIRYSKFGPDAINQIEKDYDSFVKLYFAQFDGLHKDPPIVKMDILDKMVKEMSSIERLAVRTSLDRVRLTVDAGYSFEKLISLDVSPLLYMRLLDAEGAFSDVDKNRDAINHLKGYVKAYYKHITL.

Positions 1–27 are cleaved as a signal peptide; that stretch reads MRYCAFRLGLFFIGYSCCVLLSTPTLA. A RxLR motif is present at residues 110–113; it reads RQLR.

This sequence belongs to the RxLR effector family.

It localises to the secreted. It is found in the host cell membrane. Functionally, secreted effector that partially suppresses the host cell death induced by cell death-inducing proteins. The chain is Secreted RxLR effector protein 85 from Plasmopara viticola (Downy mildew of grapevine).